Reading from the N-terminus, the 407-residue chain is Imidazolonepropionase (407 aa).

Histidine 74 and histidine 76 together coordinate Fe(3+). 2 residues coordinate Zn(2+): histidine 74 and histidine 76. 3 residues coordinate 4-imidazolone-5-propanoate: arginine 83, tyrosine 146, and histidine 179. Residue tyrosine 146 coordinates N-formimidoyl-L-glutamate. Fe(3+) is bound at residue histidine 244. Histidine 244 contacts Zn(2+). Residue glutamine 247 coordinates 4-imidazolone-5-propanoate. Residue aspartate 319 coordinates Fe(3+). Aspartate 319 serves as a coordination point for Zn(2+). N-formimidoyl-L-glutamate-binding residues include asparagine 321 and glycine 323. Threonine 324 is a 4-imidazolone-5-propanoate binding site.

The protein belongs to the metallo-dependent hydrolases superfamily. HutI family. Zn(2+) serves as cofactor. Requires Fe(3+) as cofactor.

It localises to the cytoplasm. It carries out the reaction 4-imidazolone-5-propanoate + H2O = N-formimidoyl-L-glutamate. Its pathway is amino-acid degradation; L-histidine degradation into L-glutamate; N-formimidoyl-L-glutamate from L-histidine: step 3/3. Its function is as follows. Catalyzes the hydrolytic cleavage of the carbon-nitrogen bond in imidazolone-5-propanoate to yield N-formimidoyl-L-glutamate. It is the third step in the universal histidine degradation pathway. The protein is Imidazolonepropionase of Salmonella heidelberg (strain SL476).